The chain runs to 57 residues: Large ribosomal subunit protein bL32B (57 aa).

It belongs to the bacterial ribosomal protein bL32 family.

This chain is Large ribosomal subunit protein bL32B, found in Listeria welshimeri serovar 6b (strain ATCC 35897 / DSM 20650 / CCUG 15529 / CIP 8149 / NCTC 11857 / SLCC 5334 / V8).